The sequence spans 62 residues: Large ribosomal subunit protein uL30 (62 aa).

It belongs to the universal ribosomal protein uL30 family. In terms of assembly, part of the 50S ribosomal subunit.

This Ruegeria pomeroyi (strain ATCC 700808 / DSM 15171 / DSS-3) (Silicibacter pomeroyi) protein is Large ribosomal subunit protein uL30.